Reading from the N-terminus, the 250-residue chain is uncharacterized protein (250 aa).

Residues 2–22 (ILRIIIFVIIILVVSLLLIYF) traverse the membrane as a helical segment.

It is found in the membrane. This is an uncharacterized protein from Acanthamoeba polyphaga (Amoeba).